A 560-amino-acid chain; its full sequence is Oxygen-dependent choline dehydrogenase 1 (560 aa).

An FAD-binding site is contributed by 8–37; it reads DYIIIGAGSAGNVLATRLTEDPDVQVLLLE. Histidine 475 functions as the Proton acceptor in the catalytic mechanism.

Belongs to the GMC oxidoreductase family. It depends on FAD as a cofactor.

The catalysed reaction is choline + A = betaine aldehyde + AH2. It catalyses the reaction betaine aldehyde + NAD(+) + H2O = glycine betaine + NADH + 2 H(+). Its pathway is amine and polyamine biosynthesis; betaine biosynthesis via choline pathway; betaine aldehyde from choline (cytochrome c reductase route): step 1/1. Involved in the biosynthesis of the osmoprotectant glycine betaine. Catalyzes the oxidation of choline to betaine aldehyde and betaine aldehyde to glycine betaine at the same rate. The sequence is that of Oxygen-dependent choline dehydrogenase 1 from Chromohalobacter salexigens (strain ATCC BAA-138 / DSM 3043 / CIP 106854 / NCIMB 13768 / 1H11).